A 180-amino-acid chain; its full sequence is ATP-dependent protease subunit HslV (180 aa).

Thr7 is a catalytic residue. Na(+) contacts are provided by Ala165, Cys168, and Thr171.

This sequence belongs to the peptidase T1B family. HslV subfamily. In terms of assembly, a double ring-shaped homohexamer of HslV is capped on each side by a ring-shaped HslU homohexamer. The assembly of the HslU/HslV complex is dependent on binding of ATP.

It localises to the cytoplasm. The enzyme catalyses ATP-dependent cleavage of peptide bonds with broad specificity.. Allosterically activated by HslU binding. Functionally, protease subunit of a proteasome-like degradation complex believed to be a general protein degrading machinery. The sequence is that of ATP-dependent protease subunit HslV from Geobacillus sp. (strain WCH70).